We begin with the raw amino-acid sequence, 119 residues long: DNA-binding protein MmarC7_1157 (119 aa).

The segment covering 1–12 (MNPEEIRQRRLQ) has biased composition (basic and acidic residues). Positions 1-37 (MNPEEIRQRRLQEMQAKAQEQGAANDPEAQRQAQEQQ) are disordered.

It belongs to the PDCD5 family.

This Methanococcus maripaludis (strain C7 / ATCC BAA-1331) protein is DNA-binding protein MmarC7_1157.